Here is a 148-residue protein sequence, read N- to C-terminus: Snaclec flavocetin-A subunit beta (148 aa).

Residues 1-23 (MGQFIFVSFGFLVVATSLSGTEA) form the signal peptide. 3 disulfides stabilise this stretch: Cys-27–Cys-38, Cys-55–Cys-144, and Cys-121–Cys-136. One can recognise a C-type lectin domain in the interval 34–145 (YDEHCYQVFQ…CSSKRYVVCK (112 aa)).

This sequence belongs to the snaclec family. As to quaternary structure, tetramer of heterodimers of alpha and beta subunits (alphabeta)(4); disulfide-linked. In terms of tissue distribution, expressed by the venom gland.

It localises to the secreted. Its function is as follows. Strong platelet aggregation inhibitor. Binds specifically to platelet glycoprotein Ibalpha (GP1BA) with high affinity and inhibits vWF-dependent platelet aggregation. Has also been observed to induce small agglutinates in washed platelets by binding to GPIb. The polypeptide is Snaclec flavocetin-A subunit beta (Protobothrops flavoviridis (Habu)).